The following is a 694-amino-acid chain: Methionine--tRNA ligase (694 aa).

The short motif at 12–22 (PYANGPLHLGH) is the 'HIGH' region element. 4 residues coordinate Zn(2+): Cys143, Cys146, Cys156, and Cys159. The 'KMSKS' region signature appears at 330–334 (KMSKS). Lys333 contributes to the ATP binding site. Positions 550–573 (MAAPAAPATTTKPAPSKADAKPAA) are enriched in low complexity. Residues 550-582 (MAAPAAPATTTKPAPSKADAKPAAVANPESQTT) form a disordered region. One can recognise a tRNA-binding domain in the interval 591 to 694 (DFAKLDLRIG…SGAQPGMPVR (104 aa)).

It belongs to the class-I aminoacyl-tRNA synthetase family. MetG type 1 subfamily. Homodimer. Zn(2+) serves as cofactor.

Its subcellular location is the cytoplasm. It catalyses the reaction tRNA(Met) + L-methionine + ATP = L-methionyl-tRNA(Met) + AMP + diphosphate. In terms of biological role, is required not only for elongation of protein synthesis but also for the initiation of all mRNA translation through initiator tRNA(fMet) aminoacylation. In Xanthomonas euvesicatoria pv. vesicatoria (strain 85-10) (Xanthomonas campestris pv. vesicatoria), this protein is Methionine--tRNA ligase.